The chain runs to 269 residues: Histone doublet H2B-H2A (269 aa).

The interval 1–168 (MATQKETTRK…LAGNAARDSK (168 aa)) is histone fold. Residues 210–249 (RKKARKTTEKEASSPKKKAAPKKKKAASKQKKSLSDKELA) form a disordered region. Residues 224–241 (PKKKAAPKKKKAASKQKK) show a composition bias toward basic residues.

It is found in the host nucleus. Its subcellular location is the host cytoplasm. It localises to the virion. Its function is as follows. Histone-like protein that is recruited to viral factories during viral replication and participates in viral DNA packaging and virion production probably by forming unstable nucleosome-like particles. May compact the viral DNA. This chain is Histone doublet H2B-H2A, found in Melbournevirus (MelV).